We begin with the raw amino-acid sequence, 939 residues long: Vacuolar membrane protease (939 aa).

At 1–11 (MGFNSIFKFRK) the chain is on the cytoplasmic side. The chain crosses the membrane as a helical span at residues 12 to 32 (TSLSLLLFAVYFIIGILYFID). Residues 33-356 (KTRYKHSLPI…TFVAIPSTKL (324 aa)) lie on the Vacuolar side of the membrane. Asn59, Asn88, and Asn114 each carry an N-linked (GlcNAc...) asparagine glycan. Zn(2+)-binding residues include His149 and Asp161. The active-site Proton acceptor is Glu193. Residues Glu194, Glu219, and His293 each contribute to the Zn(2+) site. Asn326 is a glycosylation site (N-linked (GlcNAc...) asparagine). A helical membrane pass occupies residues 357–377 (FWINIALLIIMPIISIFLFSI). The Cytoplasmic segment spans residues 378 to 388 (VKKYNNEIIDS). A helical transmembrane segment spans residues 389–409 (GNIWWRLPISAMSSGTIIIFT). Residues 410–424 (TKLIMKWNPYILSRN) lie on the Vacuolar side of the membrane. A helical transmembrane segment spans residues 425-445 (FLLPLIGLTFEFIILNSYILT). Residues 446-453 (MFENLSSS) lie on the Cytoplasmic side of the membrane. A helical membrane pass occupies residues 454 to 474 (FDFKTIAINEISFLFWIVLAY). Topologically, residues 475–491 (QTWKLYDNNYQNTGIYP) are vacuolar. The chain crosses the membrane as a helical span at residues 492 to 512 (FTICYIVMATAGNIGYLFLIF). Over 513 to 588 (KNIEIVEDEE…NQRTILKESK (76 aa)) the chain is Cytoplasmic. Residues 540 to 552 (YRDEINGRDDSSR) are compositionally biased toward basic and acidic residues. The tract at residues 540–561 (YRDEINGRDDSSRDSNSASIPT) is disordered. Residues 589-609 (LVYNYDWIIEFLLVVPFSTFL) form a helical membrane-spanning segment. The Vacuolar segment spans residues 610–636 (LYNSLELIMDAVNQTIQETGDLYKVYK). Asn622 is a glycosylation site (N-linked (GlcNAc...) asparagine). A helical transmembrane segment spans residues 637–657 (ILAIGSILISIPTLPFAYKIG). Residues 658 to 663 (CQLGKT) lie on the Cytoplasmic side of the membrane. A helical membrane pass occupies residues 664–684 (LTFISIGCLLISMALAPFTEM). Over 685-939 (NPIKFRFMQV…LVKLTEAMVL (255 aa)) the chain is Vacuolar. N-linked (GlcNAc...) asparagine glycans are attached at residues Asn810 and Asn820.

This sequence belongs to the peptidase M28 family. The cofactor is Zn(2+).

It is found in the vacuole membrane. Functionally, may be involved in vacuolar sorting and osmoregulation. This chain is Vacuolar membrane protease, found in Vanderwaltozyma polyspora (strain ATCC 22028 / DSM 70294 / BCRC 21397 / CBS 2163 / NBRC 10782 / NRRL Y-8283 / UCD 57-17) (Kluyveromyces polysporus).